The sequence spans 456 residues: MGGWLGRQRRLLRMGAGRFGAPMERQGRAAATSAAVGESADSEARRRDPLRRRASSAAPSGSGEAESVRRERPGSLGGSTSAGRPRAEGLRKRRPLFPWFGLDIGGTLVKLVYFEPKDITAEEEKEEVESLKSIRKYLTSNVAYGSTGIRDVHLELKDLTLCGRKGNLHFIRFPTHDMPAFIQMGRDKNFSSLHTVFCATGGGSYKFEQDFLTIGDLQLRKLDELDCLIKGILYIDSVGFNGRSQCYYFENPADSEKCQKLPFDLKNPYPLLLVNIGSGVSILAVYSKDNYKRVTGTSLGGGTFFGLCCLLTGCSTFEEALEMASRGDSTKVDKLVRDIYGGDYERFGLPGWAVASSFGNMMSKEKREAASKEDLARATLITITNNIGSIARMCALNENINQVVFVGNFLRVNTIAMRLLAYALDYWSKGQLKALFSEHEGYFGAVGALLELLKIP.

The tract at residues 16–89 (AGRFGAPMER…TSAGRPRAEG (74 aa)) is disordered. Composition is skewed to low complexity over residues 28 to 39 (RAAATSAAVGES) and 55 to 65 (SSAAPSGSGEA). A phosphoserine mark is found at Ser-55, Ser-56, and Ser-75. Residues 154–161 (LELKDLTL) carry the Nuclear export signal motif. Glu-224 acts as the Proton acceptor in catalysis. Acetyl-CoA contacts are provided by Ser-278, Ser-281, and Arg-293.

The protein belongs to the type II pantothenate kinase family. As to quaternary structure, homodimer.

The protein resides in the cytoplasm. The protein localises to the cytosol. The enzyme catalyses (R)-pantothenate + ATP = (R)-4'-phosphopantothenate + ADP + H(+). It participates in cofactor biosynthesis; coenzyme A biosynthesis; CoA from (R)-pantothenate: step 1/5. Its activity is regulated as follows. Inhibited by acetyl-CoA. Inhibited by calcium hopantenate. Activated by palmitoylcarnitine. In terms of biological role, catalyzes the phosphorylation of pantothenate to generate 4'-phosphopantothenate in the first and rate-determining step of coenzyme A (CoA) synthesis. In Mus musculus (Mouse), this protein is Pantothenate kinase 2, mitochondrial (Pank2).